The chain runs to 358 residues: Pyruvate dehydrogenase E1 component subunit alpha (358 aa).

As to quaternary structure, heterodimer of an alpha and a beta chain. It depends on thiamine diphosphate as a cofactor.

It carries out the reaction N(6)-[(R)-lipoyl]-L-lysyl-[protein] + pyruvate + H(+) = N(6)-[(R)-S(8)-acetyldihydrolipoyl]-L-lysyl-[protein] + CO2. The pyruvate dehydrogenase complex catalyzes the overall conversion of pyruvate to acetyl-CoA and CO(2). It contains multiple copies of three enzymatic components: pyruvate dehydrogenase (E1), dihydrolipoamide acetyltransferase (E2) and lipoamide dehydrogenase (E3). The sequence is that of Pyruvate dehydrogenase E1 component subunit alpha (pdhA) from Mycoplasma pneumoniae (strain ATCC 29342 / M129 / Subtype 1) (Mycoplasmoides pneumoniae).